The chain runs to 377 residues: tRNA-specific 2-thiouridylase MnmA (377 aa).

Residues 12-19 and Met-38 each bind ATP; that span reads GMSGGVDS. The interval 98 to 100 is interaction with target base in tRNA; sequence NPD. Cys-103 serves as the catalytic Nucleophile. The cysteines at positions 103 and 200 are disulfide-linked. Gly-127 contributes to the ATP binding site. Positions 150–152 are interaction with tRNA; the sequence is KDQ. The active-site Cysteine persulfide intermediate is the Cys-200. The interval 314 to 315 is interaction with tRNA; that stretch reads RY.

This sequence belongs to the MnmA/TRMU family.

Its subcellular location is the cytoplasm. It carries out the reaction S-sulfanyl-L-cysteinyl-[protein] + uridine(34) in tRNA + AH2 + ATP = 2-thiouridine(34) in tRNA + L-cysteinyl-[protein] + A + AMP + diphosphate + H(+). Catalyzes the 2-thiolation of uridine at the wobble position (U34) of tRNA, leading to the formation of s(2)U34. This Limosilactobacillus fermentum (strain NBRC 3956 / LMG 18251) (Lactobacillus fermentum) protein is tRNA-specific 2-thiouridylase MnmA.